A 671-amino-acid polypeptide reads, in one-letter code: DNA ligase (671 aa).

NAD(+) is bound by residues 32 to 36, 81 to 82, and Glu-113; these read DAEYD and SL. Residue Lys-115 is the N6-AMP-lysine intermediate of the active site. The NAD(+) site is built by Arg-136, Glu-173, Lys-290, and Lys-314. Positions 408, 411, 426, and 432 each coordinate Zn(2+). One can recognise a BRCT domain in the interval 593–671; that stretch reads EIDSPFAGKT…EAEMIRLLGA (79 aa).

It belongs to the NAD-dependent DNA ligase family. LigA subfamily. It depends on Mg(2+) as a cofactor. Mn(2+) serves as cofactor.

The enzyme catalyses NAD(+) + (deoxyribonucleotide)n-3'-hydroxyl + 5'-phospho-(deoxyribonucleotide)m = (deoxyribonucleotide)n+m + AMP + beta-nicotinamide D-nucleotide.. Its function is as follows. DNA ligase that catalyzes the formation of phosphodiester linkages between 5'-phosphoryl and 3'-hydroxyl groups in double-stranded DNA using NAD as a coenzyme and as the energy source for the reaction. It is essential for DNA replication and repair of damaged DNA. In Salmonella paratyphi C (strain RKS4594), this protein is DNA ligase.